A 170-amino-acid chain; its full sequence is Adenine phosphoribosyltransferase (170 aa).

The protein belongs to the purine/pyrimidine phosphoribosyltransferase family. As to quaternary structure, homodimer.

It localises to the cytoplasm. The catalysed reaction is AMP + diphosphate = 5-phospho-alpha-D-ribose 1-diphosphate + adenine. Its pathway is purine metabolism; AMP biosynthesis via salvage pathway; AMP from adenine: step 1/1. In terms of biological role, catalyzes a salvage reaction resulting in the formation of AMP, that is energically less costly than de novo synthesis. This chain is Adenine phosphoribosyltransferase, found in Clostridioides difficile (strain 630) (Peptoclostridium difficile).